The sequence spans 273 residues: Formamidopyrimidine-DNA glycosylase (273 aa).

Catalysis depends on Pro2, which acts as the Schiff-base intermediate with DNA. Glu3 functions as the Proton donor in the catalytic mechanism. Catalysis depends on Lys60, which acts as the Proton donor; for beta-elimination activity. The DNA site is built by His94, Arg113, and Lys154. An FPG-type zinc finger spans residues 239-273 (EAYGRTGEPCRRCGTPIERIVVAQRSTHICPVCQA). The active-site Proton donor; for delta-elimination activity is Arg263.

Belongs to the FPG family. In terms of assembly, monomer. It depends on Zn(2+) as a cofactor.

It carries out the reaction Hydrolysis of DNA containing ring-opened 7-methylguanine residues, releasing 2,6-diamino-4-hydroxy-5-(N-methyl)formamidopyrimidine.. The enzyme catalyses 2'-deoxyribonucleotide-(2'-deoxyribose 5'-phosphate)-2'-deoxyribonucleotide-DNA = a 3'-end 2'-deoxyribonucleotide-(2,3-dehydro-2,3-deoxyribose 5'-phosphate)-DNA + a 5'-end 5'-phospho-2'-deoxyribonucleoside-DNA + H(+). Involved in base excision repair of DNA damaged by oxidation or by mutagenic agents. Acts as a DNA glycosylase that recognizes and removes damaged bases. Has a preference for oxidized purines, such as 7,8-dihydro-8-oxoguanine (8-oxoG). Has AP (apurinic/apyrimidinic) lyase activity and introduces nicks in the DNA strand. Cleaves the DNA backbone by beta-delta elimination to generate a single-strand break at the site of the removed base with both 3'- and 5'-phosphates. This is Formamidopyrimidine-DNA glycosylase from Herpetosiphon aurantiacus (strain ATCC 23779 / DSM 785 / 114-95).